The primary structure comprises 195 residues: Ras-related protein Rab-31 (195 aa).

GTP-binding residues include glycine 16, glycine 18, lysine 19, serine 20, serine 21, aspartate 32, and histidine 33. Position 20 (serine 20) interacts with Mg(2+). 2 short sequence motifs (switch) span residues 30-42 (HFDHNISPTIGAS) and 63-79 (AGQERFHSLAPMYYRGS). Serine 36 bears the Phosphoserine mark. GTP contacts are provided by threonine 38, glycine 64, asparagine 119, aspartate 122, alanine 150, and lysine 151. Threonine 38 is a Mg(2+) binding site. Residues 168 to 195 (PPLGPQENGNSGGIKLGNQSLQASRRCC) are disordered. The segment covering 184 to 195 (GNQSLQASRRCC) has biased composition (polar residues). 2 S-geranylgeranyl cysteine lipidation sites follow: cysteine 194 and cysteine 195.

This sequence belongs to the small GTPase superfamily. Rab family. In terms of assembly, interacts with OCRL. Interacts (in GDP-bound form) with RIN3 and GAPVD1, which function as guanine exchange factors (GEF). Interacts with EGFR. Interacts with NGFR. Interacts (in GTP-bound form) with EEA1. Interacts (in GTP-bound form) with APPL2; interaction contributes to or enhances recruitment of APPL2 to the phagosomes; interaction enhances Fc-gamma receptor-mediated phagocytosis through PI3K/Akt signaling in macrophages. The cofactor is Mg(2+). As to expression, detected in brain astrocytes (at protein level).

The protein localises to the early endosome. It localises to the golgi apparatus. The protein resides in the trans-Golgi network. Its subcellular location is the trans-Golgi network membrane. It is found in the cytoplasmic vesicle. The protein localises to the phagosome. It localises to the phagosome membrane. The enzyme catalyses GTP + H2O = GDP + phosphate + H(+). With respect to regulation, regulated by guanine nucleotide exchange factors (GEFs) including RIN3 and GAPVD1 which promote the exchange of bound GDP for free GTP. Regulated by GTPase activating proteins (GAPs) which increase the GTP hydrolysis activity. Inhibited by GDP dissociation inhibitors (GDIs) which prevent Rab-GDP dissociation. Functionally, the small GTPases Rab are key regulators of intracellular membrane trafficking, from the formation of transport vesicles to their fusion with membranes. Rabs cycle between an inactive GDP-bound form and an active GTP-bound form that is able to recruit to membranes different set of downstream effectors directly responsible for vesicle formation, movement, tethering and fusion. Required for the integrity and for normal function of the Golgi apparatus and the trans-Golgi network. Plays a role in insulin-stimulated translocation of GLUT4 to the cell membrane. Plays a role in the maturation of phagosomes that engulf pathogens, such as S.aureus and Mycobacterium. Plays a role in M6PR transport from the trans-Golgi network to endosomes. Plays a role in the internalization of EGFR from the cell membrane into endosomes. This is Ras-related protein Rab-31 from Mus musculus (Mouse).